Consider the following 314-residue polypeptide: Formimidoylglutamase (314 aa).

Residues H127, D153, H155, D157, D245, and D247 each contribute to the Mn(2+) site.

Belongs to the arginase family. It depends on Mn(2+) as a cofactor.

It carries out the reaction N-formimidoyl-L-glutamate + H2O = formamide + L-glutamate. It participates in amino-acid degradation; L-histidine degradation into L-glutamate; L-glutamate from N-formimidoyl-L-glutamate (hydrolase route): step 1/1. Functionally, catalyzes the conversion of N-formimidoyl-L-glutamate to L-glutamate and formamide. In Aeromonas hydrophila subsp. hydrophila (strain ATCC 7966 / DSM 30187 / BCRC 13018 / CCUG 14551 / JCM 1027 / KCTC 2358 / NCIMB 9240 / NCTC 8049), this protein is Formimidoylglutamase.